Here is a 384-residue protein sequence, read N- to C-terminus: Mitogen-activated protein kinase 8 (384 aa).

Residues Tyr-26–Ile-321 enclose the Protein kinase domain. Residues Ile-32–Val-40 and Lys-55 each bind ATP. Position 116 is an S-nitrosocysteine (Cys-116). Residue Asp-151 is the Proton acceptor of the active site. The residue at position 183 (Thr-183) is a Phosphothreonine; by MAP2K7. The TXY signature appears at Thr-183–Tyr-185. Tyr-185 is modified (phosphotyrosine; by MAP2K4). Position 377 is a phosphoserine (Ser-377).

This sequence belongs to the protein kinase superfamily. CMGC Ser/Thr protein kinase family. MAP kinase subfamily. In terms of assembly, binds to at least four scaffolding proteins, MAPK8IP1/JIP-1, MAPK8IP2/JIP-2, MAPK8IP3/JIP-3/JSAP1 and SPAG9/MAPK8IP4/JIP-4. These proteins also bind other components of the JNK signaling pathway. Forms a complex with MAPK8IP1 and ARHGEF28. Interacts with TP53 and WWOX. Interacts with JAMP. Interacts with NFATC4. Interacts with MECOM; regulates JNK signaling. Interacts with PIN1; this interaction mediates MAPK8 conformational changes leading to the binding of MAPK8 to its substrates. Interacts with HSF1 (via D domain and preferentially with hyperphosphorylated form); this interaction occurs under both normal growth conditions and immediately upon heat shock. Interacts (phosphorylated form) with NFE2; the interaction phosphorylates NFE2 in undifferentiated cells. Interacts with GRIPAP1. Interacts with POU5F1; phosphorylates POU5F1 at 'Ser-347'. Found in a complex with SH3RF1, RAC1, MAP3K11/MLK3, MAP2K7/MKK7 and MAPK8IP1/JIP1. Found in a complex with SH3RF1, RAC2, MAP3K7/TAK1, MAP2K7/MKK7, MAPK8IP1/JIP1 and MAPK9/JNK2. Requires Mg(2+) as cofactor. In terms of processing, phosphorylated by TAOK2. Dually phosphorylated on Thr-183 and Tyr-185 by MAP2K7 and MAP2K4, which activates the enzyme. May be phosphorylated at Thr-183 and Tyr-185 by MAP3K1/MEKK1. Phosphorylated form is more concentrated at synapses than none-phosphorylated. Brain (at protein level).

It localises to the cytoplasm. It is found in the nucleus. The protein localises to the synapse. It catalyses the reaction L-seryl-[protein] + ATP = O-phospho-L-seryl-[protein] + ADP + H(+). The catalysed reaction is L-threonyl-[protein] + ATP = O-phospho-L-threonyl-[protein] + ADP + H(+). Its activity is regulated as follows. Inhibited by SERPINB3. Activated by threonine and tyrosine phosphorylation by either of two dual specificity kinases, MAP2K4 and MAP2K7. MAP2K4 shows a strong preference for Tyr-185 while MAP2K7 phosphorylates Tyr-183 preferentially. Inhibited by dual specificity phosphatases, such as DUSP1. In terms of biological role, serine/threonine-protein kinase involved in various processes such as cell proliferation, differentiation, migration, transformation and programmed cell death. Extracellular stimuli such as pro-inflammatory cytokines or physical stress stimulate the stress-activated protein kinase/c-Jun N-terminal kinase (SAP/JNK) signaling pathway. In this cascade, two dual specificity kinases MAP2K4/MKK4 and MAP2K7/MKK7 phosphorylate and activate MAPK8/JNK1. In turn, MAPK8/JNK1 phosphorylates a number of transcription factors, primarily components of AP-1 such as JUN, JDP2 and ATF2 and thus regulates AP-1 transcriptional activity. Phosphorylates the replication licensing factor CDT1, inhibiting the interaction between CDT1 and the histone H4 acetylase HBO1 to replication origins. Loss of this interaction abrogates the acetylation required for replication initiation. Promotes stressed cell apoptosis by phosphorylating key regulatory factors including p53/TP53 and Yes-associates protein YAP1. In T-cells, MAPK8 and MAPK9 are required for polarized differentiation of T-helper cells into Th1 cells. Contributes to the survival of erythroid cells by phosphorylating the antagonist of cell death BAD upon EPO stimulation. Mediates starvation-induced BCL2 phosphorylation, BCL2 dissociation from BECN1, and thus activation of autophagy. Phosphorylates STMN2 and hence regulates microtubule dynamics, controlling neurite elongation in cortical neurons. In the developing brain, through its cytoplasmic activity on STMN2, negatively regulates the rate of exit from multipolar stage and of radial migration from the ventricular zone. Phosphorylates several other substrates including heat shock factor protein 4 (HSF4), the deacetylase SIRT1, ELK1, or the E3 ligase ITCH. Phosphorylates the CLOCK-BMAL1 heterodimer and plays a role in the regulation of the circadian clock. Phosphorylates the heat shock transcription factor HSF1, suppressing HSF1-induced transcriptional activity. Phosphorylates POU5F1, which results in the inhibition of POU5F1's transcriptional activity and enhances its proteasomal degradation. Phosphorylates JUND and this phosphorylation is inhibited in the presence of MEN1. In neurons, phosphorylates SYT4 which captures neuronal dense core vesicles at synapses. Phosphorylates EIF4ENIF1/4-ET in response to oxidative stress, promoting P-body assembly. Phosphorylates SIRT6 in response to oxidative stress, stimulating its mono-ADP-ribosyltransferase activity. Phosphorylates NLRP3, promoting assembly of the NLRP3 inflammasome. Phosphorylates ALKBH5 in response to reactive oxygen species (ROS), promoting ALKBH5 sumoylation and inactivation. The protein is Mitogen-activated protein kinase 8 (Mapk8) of Mus musculus (Mouse).